We begin with the raw amino-acid sequence, 130 residues long: Small ribosomal subunit protein uS9 (130 aa).

The segment at 104–130 (LTRDPRMKERKKYGLKKARRAPQFSKR) is disordered. Residues 111–130 (KERKKYGLKKARRAPQFSKR) are compositionally biased toward basic residues.

This sequence belongs to the universal ribosomal protein uS9 family.

This Ruminiclostridium cellulolyticum (strain ATCC 35319 / DSM 5812 / JCM 6584 / H10) (Clostridium cellulolyticum) protein is Small ribosomal subunit protein uS9.